The chain runs to 254 residues: Glycerol operon regulatory protein (254 aa).

Residues I5 to A67 enclose the HTH iclR-type domain. A DNA-binding region (H-T-H motif) is located at residues L27–R46. The 170-residue stretch at L82 to A251 folds into the IclR-ED domain.

Its function is as follows. May be an activator protein for the gylABX operon. The polypeptide is Glycerol operon regulatory protein (gylR) (Streptomyces griseus).